A 911-amino-acid chain; its full sequence is Protein translocase subunit SecA (911 aa).

ATP-binding positions include Gln-87, 105–109 (GEGKT), and Asp-512. The disordered stretch occupies residues 861–893 (APGLESEQLSEEGAEVAVASAPVRNDQKLGRNE). Residues Cys-895, Cys-897, Cys-906, and His-907 each contribute to the Zn(2+) site.

The protein belongs to the SecA family. As to quaternary structure, monomer and homodimer. Part of the essential Sec protein translocation apparatus which comprises SecA, SecYEG and auxiliary proteins SecDF-YajC and YidC. Requires Zn(2+) as cofactor.

It localises to the cell inner membrane. The protein resides in the cytoplasm. It carries out the reaction ATP + H2O + cellular proteinSide 1 = ADP + phosphate + cellular proteinSide 2.. Functionally, part of the Sec protein translocase complex. Interacts with the SecYEG preprotein conducting channel. Has a central role in coupling the hydrolysis of ATP to the transfer of proteins into and across the cell membrane, serving both as a receptor for the preprotein-SecB complex and as an ATP-driven molecular motor driving the stepwise translocation of polypeptide chains across the membrane. The polypeptide is Protein translocase subunit SecA (Pseudomonas putida (strain ATCC 700007 / DSM 6899 / JCM 31910 / BCRC 17059 / LMG 24140 / F1)).